Here is a 243-residue protein sequence, read N- to C-terminus: Ribonuclease 3 (243 aa).

Residues 10–146 (VNRFRKRFDT…FIGALYLDQG (137 aa)) enclose the RNase III domain. Position 59 (Glu59) interacts with Mg(2+). Residue Asp63 is part of the active site. Residues Asp132 and Glu135 each contribute to the Mg(2+) site. Glu135 is an active-site residue. Residues 172–241 (DFKTQFQEYV…AKSAYKQLKQ (70 aa)) form the DRBM domain. Positions 219 to 231 (GKGKTKKESEQRA) are enriched in basic and acidic residues. The segment at 219-243 (GKGKTKKESEQRAAKSAYKQLKQIK) is disordered.

Belongs to the ribonuclease III family. Homodimer. It depends on Mg(2+) as a cofactor.

The protein localises to the cytoplasm. It carries out the reaction Endonucleolytic cleavage to 5'-phosphomonoester.. In terms of biological role, digests double-stranded RNA. Involved in the processing of primary rRNA transcript to yield the immediate precursors to the large and small rRNAs (23S and 16S). Processes some mRNAs, and tRNAs when they are encoded in the rRNA operon. Processes pre-crRNA and tracrRNA of type II CRISPR loci if present in the organism. The chain is Ribonuclease 3 from Staphylococcus aureus (strain Mu3 / ATCC 700698).